Consider the following 183-residue polypeptide: UPF0316 protein EF_1609 (183 aa).

Helical transmembrane passes span 1–21, 35–55, and 62–82; these read MVVDLKMLAMIFIINFAYITL, VIAPLVSMAEITIYVLGLSMV, and PLNLLVYALGYAVGISVGIKI.

This sequence belongs to the UPF0316 family.

It is found in the cell membrane. The polypeptide is UPF0316 protein EF_1609 (Enterococcus faecalis (strain ATCC 700802 / V583)).